Here is a 560-residue protein sequence, read N- to C-terminus: Triacylglyceride transporter MSMEG_3069/MSMEI_2992 (560 aa).

A run of 14 helical transmembrane segments spans residues 16–36 (LAVL…VDIM), 48–68 (QVTP…PLLG), 78–98 (MLIQ…ALSS), 108–128 (IIQG…AADL), 143–163 (AAQE…VWLF), 168–188 (AVFW…HFSL), 200–220 (VDVI…VGLY), 229–249 (VLPS…VAFF), 269–289 (PFLA…VTLV), 307–327 (AFLL…GGWL), 336–356 (VVLI…HWSV), 368–388 (FTLP…GLVI), 411–431 (VVVA…AWGF), and 477–497 (IFLS…LISG). A beta-hairpin region spans residues 362–371 (RHNLGLFTLP). Residues 519-560 (IDPYDAGDADDAPTEMLDLPTQVLSAPPSDPGDERPGRHRAP) are disordered.

Belongs to the major facilitator superfamily. P55 (TC 2.A.1.3.34) family.

Its subcellular location is the cell inner membrane. Resistance to ethidium bromide is inhibited by reserpine. Its function is as follows. In association with lipoprotein LprG transports triacyglycerides (TAG) across the inner cell membrane into the periplasm; TAG probably regulates lipid metabolism and growth regulation and plays a structural role in the outer membrane. TAG (and maybe other lipids) enters the central cavity of the P55 transporter from within the cell inner membrane via clefts on the cytoplasmic face of P55 between TM5-TM8 and TM2-TM11. From there the lipid is probably transferred to the hydrophobic cavity of LprG. Confers resistance to ethidium bromide, possibly acting as an efflux pump, requires LprG lipoprotein for normal function. Export of ethidium bromide can be complemented by the equivalent operon from M.tuberculosis (lprG-Rv1410c). Involved in drug susceptibilty, its expression alone partially complements the antibiotic susceptibilty of a double lprG-mfs deletion. Probably does not function as a bona fide drug efflux pump, but instead plays a role in outer membrane biogenesis. Probably required with LprG for normal surface localization of lipoarabinomannan (LAM). The sequence is that of Triacylglyceride transporter MSMEG_3069/MSMEI_2992 from Mycolicibacterium smegmatis (strain ATCC 700084 / mc(2)155) (Mycobacterium smegmatis).